Here is a 330-residue protein sequence, read N- to C-terminus: uncharacterized protein (330 aa).

This is an uncharacterized protein from Schizosaccharomyces pombe (strain 972 / ATCC 24843) (Fission yeast).